The chain runs to 671 residues: ABC transporter ATP-binding protein/permease wht-1 (671 aa).

Topologically, residues 1–408 (MHKAPISTLI…SWLTVIRDPN (408 aa)) are cytoplasmic. Residues 64–310 (TNFVDRFRNN…FEKCGYPCPA (247 aa)) enclose the ABC transporter domain. Position 100–107 (100–107 (GSSGAGKT)) interacts with ATP. The chain crosses the membrane as a helical span at residues 409 to 429 (LLSVRLLQILITAFITGIVFF). The Extracellular segment spans residues 430–451 (QTPVTPATIISINGIMFNHIRN). The chain crosses the membrane as a helical span at residues 452–472 (MNFMLQFPNVPVITAELPIVL). Residues 473-497 (RENANGVYRTSAYFLAKNIAELPQY) lie on the Cytoplasmic side of the membrane. A helical transmembrane segment spans residues 498–518 (IILPILYNTIVYWMSGLYPNF). The Extracellular portion of the chain corresponds to 519-525 (WNYCFAS). A helical transmembrane segment spans residues 526–546 (LVTILITNVAISISYAVATIF). Over 547–550 (ANTD) the chain is Cytoplasmic. Residues 551-571 (VAMTILPIFVVPIMAFGGFFI) form a helical membrane-spanning segment. At 572 to 644 (TFDAIPSYFK…DFSASHKIFD (73 aa)) the chain is on the extracellular side. Residues 645-665 (ISILFGMFIGIRIIAYVALLI) traverse the membrane as a helical segment. Residues 666–671 (RSYNNT) are Cytoplasmic-facing.

Belongs to the ABC transporter superfamily. ABCG family. Eye pigment precursor importer (TC 3.A.1.204) subfamily. Expressed in the intestine in both larvae and adults. Expressed in the gut of males.

Its subcellular location is the membrane. In terms of biological role, required for efficient RNA interference (RNAi). Plays a role in germline development. The protein is ABC transporter ATP-binding protein/permease wht-1 of Caenorhabditis elegans.